A 64-amino-acid polypeptide reads, in one-letter code: Protein DsrB (64 aa).

The protein belongs to the DsrB family.

The chain is Protein DsrB from Salmonella enteritidis PT4 (strain P125109).